The sequence spans 181 residues: Transcription antitermination protein NusB (181 aa).

Positions Met1–Asn36 are disordered.

This sequence belongs to the NusB family.

In terms of biological role, involved in transcription antitermination. Required for transcription of ribosomal RNA (rRNA) genes. Binds specifically to the boxA antiterminator sequence of the ribosomal RNA (rrn) operons. In Variovorax paradoxus (strain S110), this protein is Transcription antitermination protein NusB.